The following is a 249-amino-acid chain: Putative type I specificity subunit S.MpnORF615P (249 aa).

It belongs to the type-I restriction system S methylase family. As to quaternary structure, the methyltransferase is composed of M and S polypeptides.

Its function is as follows. The specificity (S) subunit of a type I methyltransferase (MTase); this subunit dictates DNA sequence specificity. The single R subunit has multiple frameshifts and is probably not expressed. The sequence is that of Putative type I specificity subunit S.MpnORF615P from Mycoplasma pneumoniae (strain ATCC 29342 / M129 / Subtype 1) (Mycoplasmoides pneumoniae).